We begin with the raw amino-acid sequence, 482 residues long: UDP-N-acetylmuramate--L-alanine ligase (482 aa).

119 to 125 (GTHGKTT) is a binding site for ATP.

This sequence belongs to the MurCDEF family.

The protein resides in the cytoplasm. It catalyses the reaction UDP-N-acetyl-alpha-D-muramate + L-alanine + ATP = UDP-N-acetyl-alpha-D-muramoyl-L-alanine + ADP + phosphate + H(+). Its pathway is cell wall biogenesis; peptidoglycan biosynthesis. Cell wall formation. In Cyanothece sp. (strain PCC 7425 / ATCC 29141), this protein is UDP-N-acetylmuramate--L-alanine ligase.